We begin with the raw amino-acid sequence, 683 residues long: MTLKEHKTVHEAQNAVARQAPEHFYKSQPSRGGFIKDISEYERLYKQSIEDPETFFSEKARELLHWDAPFSKVSYGSLEQGDVAWFLNGKLNASYNCVDRHAFANPDKPAIIYEADDEKDNYTITFGELLRRVSKVAGILKSWGVKKGDTVAIYLPMIPEAIIAMLAVVRLGAIHSVVFAGFSAGSLKDRVVDAGSKVVITCDEGRRGGKTVHLKKIVDEGLNGVDQVSRILVFKRTGTEGIPMKAGRDFWLHEEADKRRSYLPPVPCDAEDPLFLLYTSGSTGSPKGIVHTTGGYLLGAAMTTKYVFDVHPEDVFFTAGDVGWITGHTYALYGPLLLGVPTICFESTPAYPDYGRYWRIVERHKATHFYVAPTAMRLIKRVGEAEISKYDLSSLRVLGSVGEPISPELWEWYNEKIGNNNCVVCDTFWQTESGSHLIAPMAGAIPTKPGSTTLPFFGIDACIIDPVSGVEIEGNDVEGVLAVKSPWPSMARSVWNDHVRYVDTYMKPYPGYYFTGDGAGRDHDGYYWIRGRVDDVVNVSGHRLSTAEIEACLVNHENISETAVVGINDELTGQAVIAFVSLKEGYLQNDAPEGDAEHITPSNLRRELILQVRGEIGPFASPKCIILVRDLPKTRSGKIMRRVLRKIASNEADQLGDLSTLANADVVPAIISACENQFFAEKK.

CoA-binding positions include 207–210 and T326; that span reads RGGK. Residues 402–404, 426–431, D517, and R532 contribute to the ATP site; these read GEP and DTFWQT. S540 lines the CoA pocket. Position 543 (R543) interacts with ATP. Residue R613 coordinates CoA.

The protein belongs to the ATP-dependent AMP-binding enzyme family.

The enzyme catalyses acetate + ATP + CoA = acetyl-CoA + AMP + diphosphate. The protein is Acetyl-coenzyme A synthetase 2 (ACS2) of Candida glabrata (strain ATCC 2001 / BCRC 20586 / JCM 3761 / NBRC 0622 / NRRL Y-65 / CBS 138) (Yeast).